Reading from the N-terminus, the 153-residue chain is Small ribosomal subunit protein eS19 (153 aa).

2 disordered regions span residues 77–99 (YGTSKQGTTRYRVRPHQKTKGSG) and 113–139 (GYVETSENDGRRVTGDGRSLLDDTAGD). Basic and acidic residues predominate over residues 120-133 (NDGRRVTGDGRSLL).

This sequence belongs to the eukaryotic ribosomal protein eS19 family. In terms of assembly, part of the 30S ribosomal subunit.

Its function is as follows. May be involved in maturation of the 30S ribosomal subunit. This Haloarcula marismortui (strain ATCC 43049 / DSM 3752 / JCM 8966 / VKM B-1809) (Halobacterium marismortui) protein is Small ribosomal subunit protein eS19.